We begin with the raw amino-acid sequence, 451 residues long: Phosphoglucosamine mutase (451 aa).

S103 acts as the Phosphoserine intermediate in catalysis. Mg(2+) contacts are provided by S103, D243, D245, and D247. S103 bears the Phosphoserine mark.

Belongs to the phosphohexose mutase family. It depends on Mg(2+) as a cofactor. In terms of processing, activated by phosphorylation.

The enzyme catalyses alpha-D-glucosamine 1-phosphate = D-glucosamine 6-phosphate. Functionally, catalyzes the conversion of glucosamine-6-phosphate to glucosamine-1-phosphate. The protein is Phosphoglucosamine mutase of Lactobacillus gasseri (strain ATCC 33323 / DSM 20243 / BCRC 14619 / CIP 102991 / JCM 1131 / KCTC 3163 / NCIMB 11718 / NCTC 13722 / AM63).